We begin with the raw amino-acid sequence, 180 residues long: Interleukin-17B (180 aa).

Residues 1–20 (MDWPHNLLFLLTISIFLGLG) form the signal peptide. The interval 22–44 (PRSPKSKRKGQGRPGPLAPGPHQ) is disordered. Asn-75 is a glycosylation site (N-linked (GlcNAc...) asparagine). 2 cysteine pairs are disulfide-bonded: Cys-121/Cys-176 and Cys-126/Cys-178.

The protein belongs to the IL-17 family. Expressed in adult pancreas, small intestine, stomach, spinal cord and testis. Less pronounced expression in prostate, colon mucosal lining, and ovary.

The protein resides in the secreted. Stimulates the release of tumor necrosis factor alpha and IL-1-beta from the monocytic cell line THP-1. This is Interleukin-17B (IL17B) from Homo sapiens (Human).